We begin with the raw amino-acid sequence, 408 residues long: WD repeat-containing protein JIP5 (408 aa).

6 WD repeats span residues 5–44 (PVGSQIFDVVFHPSSAIAYTGLLNGHIKAFAYGEQGDSHN), 50–86 (PSKRSCRGLSLNGDGSKLYAVGKSKALHIVDTTTTDI), 87–130 (DARS…SVKT), 133–172 (QHFDYISDFLWLDDKKQLVATSGDGTLSVMDVRAKEPKVV), 177–216 (DQEDDLLSIVAIKSAQKILVGTQLGILSVFNRKKGWGDCV), and 221–267 (GHPL…FLGV). The disordered stretch occupies residues 311 to 408 (VDSDEEEDDE…VIDKDFFDGL (98 aa)). 2 stretches are compositionally biased toward acidic residues: residues 313–339 (SDEEEDDEEEWGGIEGADGSEGEEDEE) and 356–366 (DESDDEDEEME). Residues 396–408 (KETVIDKDFFDGL) show a composition bias toward basic and acidic residues.

This sequence belongs to the WD repeat WDR55 family.

It is found in the nucleus. The protein resides in the nucleolus. The protein is WD repeat-containing protein JIP5 (JIP5) of Coprinopsis cinerea (strain Okayama-7 / 130 / ATCC MYA-4618 / FGSC 9003) (Inky cap fungus).